We begin with the raw amino-acid sequence, 559 residues long: MRYKSMGDSLSIRNEKAFEAALQALRRHAIKDGVYDIRRHFIEDEQRFSNFSLNLDDFLFDFSKCGVTFKTLQLLDDLAVAADVLGRRDAMFSGKAINTTEKRSVLHIALRLPADEVFMLDGTDLVHDIQGVLADMERFSDMVRDGSYKGNSGEKIIDIVNIGIGGSDLGPAMVTYALKPYHDGPNCHFVSNADSAHISDTLSVLNPATTLFVIASKTFTTAETIANAQVARQWIMSHLGKEAVCKHFIAVSSALDKVAEFGIDSSRTFRFWDWVGGRYSIWSAIGLVVMLAIGGQNFRQFLEGAQHMDRHFKTAPLRKNIPIRFALLGFWHRVVCGYASRAVIPYAQRLARFPAYLQQLDMESNGKQVSLDGKTLTFSSGPVVWGDSGTNGQHAFFQLLHQGTDVIPVEFILFIKGHEQNLHPMYDMLVANCLAQSKALMKGRSVEDARRMLLKSGIDERESENLALHKSFAGNRPNMMLVQDLLTPFALGRLIALYEHRIFVEGILMNINSFDQWGVELGKELANELLPILRGENKTNNRDSSTLGLLAHIQARRGE.

E363 serves as the catalytic Proton donor. Active-site residues include H394 and K523.

The protein belongs to the GPI family.

It localises to the cytoplasm. The enzyme catalyses alpha-D-glucose 6-phosphate = beta-D-fructose 6-phosphate. Its pathway is carbohydrate biosynthesis; gluconeogenesis. The protein operates within carbohydrate degradation; glycolysis; D-glyceraldehyde 3-phosphate and glycerone phosphate from D-glucose: step 2/4. Its function is as follows. Catalyzes the reversible isomerization of glucose-6-phosphate to fructose-6-phosphate. This chain is Glucose-6-phosphate isomerase, found in Bartonella henselae (strain ATCC 49882 / DSM 28221 / CCUG 30454 / Houston 1) (Rochalimaea henselae).